The following is a 511-amino-acid chain: Glycerol kinase (511 aa).

Thr-11 is a binding site for ADP. Thr-11, Ser-12, and Ser-13 together coordinate ATP. A sn-glycerol 3-phosphate-binding site is contributed by Thr-11. Residue Arg-15 participates in ADP binding. The sn-glycerol 3-phosphate site is built by Arg-81, Glu-82, Tyr-133, and Asp-242. Glycerol is bound by residues Arg-81, Glu-82, Tyr-133, Asp-242, and Gln-243. Residues Thr-264 and Gly-321 each coordinate ADP. ATP-binding residues include Thr-264, Gly-321, Gln-325, and Gly-426. Residues Gly-426 and Asn-430 each coordinate ADP.

This sequence belongs to the FGGY kinase family.

The enzyme catalyses glycerol + ATP = sn-glycerol 3-phosphate + ADP + H(+). Its pathway is polyol metabolism; glycerol degradation via glycerol kinase pathway; sn-glycerol 3-phosphate from glycerol: step 1/1. Its activity is regulated as follows. Inhibited by fructose 1,6-bisphosphate (FBP). Functionally, key enzyme in the regulation of glycerol uptake and metabolism. Catalyzes the phosphorylation of glycerol to yield sn-glycerol 3-phosphate. This is Glycerol kinase from Verminephrobacter eiseniae (strain EF01-2).